The following is a 281-amino-acid chain: Shikimate dehydrogenase (NADP(+)) (281 aa).

Shikimate contacts are provided by residues 20–22 (SRS) and Thr67. Lys71 (proton acceptor) is an active-site residue. An NADP(+)-binding site is contributed by Asp83. Shikimate is bound by residues Asn92 and Asp108. NADP(+) contacts are provided by residues 133–137 (GAGGA), 157–162 (NRTEAR), and Met225. Tyr227 contacts shikimate. An NADP(+)-binding site is contributed by Gly248.

Belongs to the shikimate dehydrogenase family. In terms of assembly, homodimer.

The catalysed reaction is shikimate + NADP(+) = 3-dehydroshikimate + NADPH + H(+). It functions in the pathway metabolic intermediate biosynthesis; chorismate biosynthesis; chorismate from D-erythrose 4-phosphate and phosphoenolpyruvate: step 4/7. Functionally, involved in the biosynthesis of the chorismate, which leads to the biosynthesis of aromatic amino acids. Catalyzes the reversible NADPH linked reduction of 3-dehydroshikimate (DHSA) to yield shikimate (SA). This Paracidovorax citrulli (strain AAC00-1) (Acidovorax citrulli) protein is Shikimate dehydrogenase (NADP(+)).